The sequence spans 116 residues: Vesicle-associated membrane protein 2 (116 aa).

Positions 1–33 (MSATAATAPPAAPAGEGGPPAPPPNLTSNRRLQ) are disordered. At S2 the chain carries N-acetylserine. Residues 2–94 (SATAATAPPA…KRKYWWKNLK (93 aa)) are Cytoplasmic-facing. The v-SNARE coiled-coil homology domain occupies 31 to 91 (RLQQTQAQVD…AKLKRKYWWK (61 aa)). A required for interaction with SEPT8 region spans residues 92–116 (NLKMMIILGVICAIILIIIIVYFSS). Residues 95-114 (MMIILGVICAIILIIIIVYF) traverse the membrane as a helical; Anchor for type IV membrane protein segment. Over 115-116 (SS) the chain is Vesicular.

Belongs to the synaptobrevin family. In terms of assembly, part of the SNARE core complex containing SNAP25, VAMP2 and STX1A; this complex constitutes the basic catalytic machinery of the complex neurotransmitter release apparatus. Recruited to the SNARE complex following binding of the SNARE complex component STX1A to STXBP1. This complex binds to CPLX1. Interacts with POPDC1 and STX4. Interacts with VAPA and VAPB. Interacts with WDFY2, PRKCZ and PRKCI. Forms a complex with WDFY2 and PRKCZ. Interacts (via N-terminus) with KCNB1 (via N-terminus and C-terminus); stimulates the channel inactivation rate of KCNB1. Interacts with SEPT8; the interaction inhibits interaction of VAMP2 with SYP. Interacts with SYP; the interaction is inhibited by interaction with SEPT8. Interacts with PICALM. Interacts with alpha-synuclein/SNCA. Interacts with STX3. Post-translationally, phosphorylated by PRKCZ in vitro and this phosphorylation is increased in the presence of WDFY2.

The protein localises to the cytoplasmic vesicle. It is found in the secretory vesicle. Its subcellular location is the synaptic vesicle membrane. The protein resides in the cell membrane. Functionally, involved in the targeting and/or fusion of transport vesicles to their target membrane. Major SNARE protein of synaptic vesicles which mediates fusion of synaptic vesicles to release neurotransmitters. Essential for fast vesicular exocytosis and activity-dependent neurotransmitter release as well as fast endocytosis that mediates rapid reuse of synaptic vesicles. Modulates the gating characteristics of the delayed rectifier voltage-dependent potassium channel KCNB1. The chain is Vesicle-associated membrane protein 2 (VAMP2) from Bos taurus (Bovine).